A 120-amino-acid polypeptide reads, in one-letter code: MAQPAAIIRIKNLRLRTFIGIKEEEINNRQDIVINVTIHYPADKARTSEDINDALNYRTVTKNIIQHVENNRFSLLEKLTQDVLDIAREHHWVTYAEVEIDKLHALRYADSVSMTLSWQR.

It belongs to the DHNA family. Homooctamer.

It carries out the reaction 7,8-dihydroneopterin 3'-triphosphate = 7,8-dihydromonapterin 3'-triphosphate. Its function is as follows. Catalyzes the epimerization of carbon 2' of the side chain of 7,8-dihydroneopterin triphosphate (H2NTP) to form 7,8-dihydromonapterin triphosphate (H2MTP). Is required for tetrahydromonapterin biosynthesis. This chain is Dihydroneopterin triphosphate 2'-epimerase (folX), found in Escherichia coli O157:H7.